A 345-amino-acid polypeptide reads, in one-letter code: Green-sensitive opsin (345 aa).

Residues 1–37 (MENGTEGKNFYIPMNNRTGLVRSPYEYPQYYLADPWQ) lie on the Extracellular side of the membrane. Residues Asn-3 and Asn-16 are each glycosylated (N-linked (GlcNAc...) asparagine). A helical membrane pass occupies residues 38–62 (FKLLGIYMFFLILTGFPINALTLVV). Over 63–74 (TAQNKKLRQPLN) the chain is Cytoplasmic. A helical membrane pass occupies residues 75-100 (FILVNLAVAGLIMVCFGFTVCIYSCM). At 101–114 (VGYFSLGPLGCTIE) the chain is on the extracellular side. Cysteines 111 and 188 form a disulfide. A helical membrane pass occupies residues 115-134 (GFMATLGGQVSLWSLVVLAI). Over 135-153 (ERYIVVCKPMGSFKFTATH) the chain is Cytoplasmic. Residues 154 to 177 (SAAGCAFTWIMASSCAVPPLVGWS) form a helical membrane-spanning segment. At 178–203 (RYIPEGIQVSCGPDYYTLAPGFNNES) the chain is on the extracellular side. The N-linked (GlcNAc...) asparagine glycan is linked to Asn-201. The chain crosses the membrane as a helical span at residues 204–231 (FVMYMFSCHFCVPVFTIFFTYGSLVMTV). Residues 232-253 (KAAAAQQQDSASTQKAEKEVTR) are Cytoplasmic-facing. A helical transmembrane segment spans residues 254-277 (MCFLMVLGFLLAWVPYASYAAWIF). At 278-285 (FNRGAAFS) the chain is on the extracellular side. A helical membrane pass occupies residues 286 to 310 (AMSMAIPSFFSKSSALFNPIIYILL). Lys-297 carries the N6-(retinylidene)lysine modification. At 311–345 (NKQFRNCMLATIGMGGMVEDETSVSTSKTEVSTAA) the chain is on the cytoplasmic side.

Belongs to the G-protein coupled receptor 1 family. Opsin subfamily. Post-translationally, phosphorylated on some or all of the serine and threonine residues present in the C-terminal region. In terms of tissue distribution, the color pigments are found in the cone photoreceptor cells.

The protein localises to the membrane. Visual pigments are the light-absorbing molecules that mediate vision. They consist of an apoprotein, opsin, covalently linked to cis-retinal. This is Green-sensitive opsin from Oryzias latipes (Japanese rice fish).